A 541-amino-acid chain; its full sequence is Halolysin-like extracellular serine protease Nep (541 aa).

Positions 1–33 form a signal peptide, tat-type signal; that stretch reads MTRDTNSNVGRRSVLKAASALGAFLGLGGVASA. Positions 34–121 are excised as a propeptide; sequence TPGREPGPKK…DNATYETLEV (88 aa). The Peptidase S8 domain occupies 130–405; the sequence is QYAPQQVNCE…YGRVDAELAV (276 aa). Residues Asp157, His198, and Ser351 each act as charge relay system in the active site. The segment at 403–453 is disordered; that stretch reads LAVTTDPDNGDDDDDDDDDEDDPGDGECGDETNTATADGELSGGWGGNPSD. Positions 410 to 432 are enriched in acidic residues; the sequence is DNGDDDDDDDDDEDDPGDGECGD.

The protein belongs to the peptidase S8 family. Monomer. In terms of processing, exported by the Tat system. The position of the signal peptide cleavage has not been experimentally proven. After transport across the membrane, the propeptide is probably processed autocatalytically, yielding the mature fully active protease.

The protein localises to the secreted. Its activity is regulated as follows. Dependent on high salt concentrations for activity and stability. Strongly inhibited by the serine protease inhibitors diisopropyl fluorophosphate (DFP), phenylmethyl sulfonylfluoride (PMSF) and chymostatin. Also inhibited by denaturing agents such as SDS, urea, and HCl guanidinium. Activated by thiol-containing reducing agents such as dithiotreitol (DTT) and 2-mercaptoethanol. Serine protease that hydrolyzes large proteins such as casein and gelatin. Cleaves preferentially at the carboxyl terminus of Phe, Tyr or Leu. Is also able to catalyze peptide synthesis under different salt concentrations in the presence of dimethyl sulfoxide (DMSO). In Natrialba magadii, this protein is Halolysin-like extracellular serine protease Nep.